Reading from the N-terminus, the 320-residue chain is o-succinylbenzoate synthase (320 aa).

Residue K133 is the Proton donor of the active site. Positions 161, 190, and 213 each coordinate Mg(2+). Catalysis depends on K235, which acts as the Proton acceptor.

Belongs to the mandelate racemase/muconate lactonizing enzyme family. MenC type 1 subfamily. Requires a divalent metal cation as cofactor.

The enzyme catalyses (1R,6R)-6-hydroxy-2-succinyl-cyclohexa-2,4-diene-1-carboxylate = 2-succinylbenzoate + H2O. Its pathway is quinol/quinone metabolism; 1,4-dihydroxy-2-naphthoate biosynthesis; 1,4-dihydroxy-2-naphthoate from chorismate: step 4/7. It functions in the pathway quinol/quinone metabolism; menaquinone biosynthesis. In terms of biological role, converts 2-succinyl-6-hydroxy-2,4-cyclohexadiene-1-carboxylate (SHCHC) to 2-succinylbenzoate (OSB). In Escherichia coli O6:H1 (strain CFT073 / ATCC 700928 / UPEC), this protein is o-succinylbenzoate synthase.